A 341-amino-acid chain; its full sequence is Mediator of RNA polymerase II transcription subunit 18 (341 aa).

A disordered region spans residues 139-216 (KVMDKEKVQS…KEHSEGNASQ (78 aa)). The span at 163–211 (EDKKENIKKEESGEEVKGSGEEVKGSGEEVKGSGEEAKKSGEEAKEHSE) shows a compositional bias: basic and acidic residues.

It belongs to the Mediator complex subunit 18 family. Component of the Mediator complex.

It is found in the nucleus. In terms of biological role, component of the Mediator complex, a coactivator involved in the regulated transcription of nearly all RNA polymerase II-dependent genes. Mediator functions as a bridge to convey information from gene-specific regulatory proteins to the basal RNA polymerase II transcription machinery. Mediator is recruited to promoters by direct interactions with regulatory proteins and serves as a scaffold for the assembly of a functional preinitiation complex with RNA polymerase II and the general transcription factors. In Debaryomyces hansenii (strain ATCC 36239 / CBS 767 / BCRC 21394 / JCM 1990 / NBRC 0083 / IGC 2968) (Yeast), this protein is Mediator of RNA polymerase II transcription subunit 18 (SRB5).